A 932-amino-acid chain; its full sequence is Glycine dehydrogenase (decarboxylating) (932 aa).

The residue at position 685 (Lys-685) is an N6-(pyridoxal phosphate)lysine.

Belongs to the GcvP family. As to quaternary structure, the glycine cleavage system is composed of four proteins: P, T, L and H. The cofactor is pyridoxal 5'-phosphate.

The catalysed reaction is N(6)-[(R)-lipoyl]-L-lysyl-[glycine-cleavage complex H protein] + glycine + H(+) = N(6)-[(R)-S(8)-aminomethyldihydrolipoyl]-L-lysyl-[glycine-cleavage complex H protein] + CO2. In terms of biological role, the glycine cleavage system catalyzes the degradation of glycine. The P protein binds the alpha-amino group of glycine through its pyridoxal phosphate cofactor; CO(2) is released and the remaining methylamine moiety is then transferred to the lipoamide cofactor of the H protein. The sequence is that of Glycine dehydrogenase (decarboxylating) from Brucella suis (strain ATCC 23445 / NCTC 10510).